A 214-amino-acid polypeptide reads, in one-letter code: Putative F-box protein At3g58910 (214 aa).

Positions 1 to 47 (MDRVSSLPDELLCHILSFLTTKETALTSLLSKREIIPLIKSVVFPTL) constitute an F-box domain.

The sequence is that of Putative F-box protein At3g58910 from Arabidopsis thaliana (Mouse-ear cress).